The primary structure comprises 189 residues: Elongation factor P (189 aa).

The protein belongs to the elongation factor P family.

The protein localises to the cytoplasm. Its pathway is protein biosynthesis; polypeptide chain elongation. Its function is as follows. Involved in peptide bond synthesis. Stimulates efficient translation and peptide-bond synthesis on native or reconstituted 70S ribosomes in vitro. Probably functions indirectly by altering the affinity of the ribosome for aminoacyl-tRNA, thus increasing their reactivity as acceptors for peptidyl transferase. The protein is Elongation factor P of Rhizobium leguminosarum bv. trifolii (strain WSM2304).